A 231-amino-acid polypeptide reads, in one-letter code: 5'-methylthioadenosine/S-adenosylhomocysteine nucleosidase (231 aa).

E12 (proton acceptor) is an active-site residue. Substrate is bound by residues G78, V153, and 174-175 (ME). The Proton donor role is filled by D198.

Belongs to the PNP/UDP phosphorylase family. MtnN subfamily.

The enzyme catalyses S-adenosyl-L-homocysteine + H2O = S-(5-deoxy-D-ribos-5-yl)-L-homocysteine + adenine. The catalysed reaction is S-methyl-5'-thioadenosine + H2O = 5-(methylsulfanyl)-D-ribose + adenine. It catalyses the reaction 5'-deoxyadenosine + H2O = 5-deoxy-D-ribose + adenine. Its pathway is amino-acid biosynthesis; L-methionine biosynthesis via salvage pathway; S-methyl-5-thio-alpha-D-ribose 1-phosphate from S-methyl-5'-thioadenosine (hydrolase route): step 1/2. In terms of biological role, catalyzes the irreversible cleavage of the glycosidic bond in both 5'-methylthioadenosine (MTA) and S-adenosylhomocysteine (SAH/AdoHcy) to adenine and the corresponding thioribose, 5'-methylthioribose and S-ribosylhomocysteine, respectively. Also cleaves 5'-deoxyadenosine, a toxic by-product of radical S-adenosylmethionine (SAM) enzymes, into 5-deoxyribose and adenine. The chain is 5'-methylthioadenosine/S-adenosylhomocysteine nucleosidase from Vibrio vulnificus (strain CMCP6).